The following is a 762-amino-acid chain: 5-methyltetrahydropteroyltriglutamate--homocysteine methyltransferase (762 aa).

5-methyltetrahydropteroyltri-L-glutamate is bound by residues 17-20 (REWK) and Lys111. Residues 435 to 437 (IGS) and Glu488 each bind L-homocysteine. L-methionine-binding positions include 435–437 (IGS) and Glu488. Residues 519–520 (RC) and Trp565 each bind 5-methyltetrahydropteroyltri-L-glutamate. Position 603 (Asp603) interacts with L-homocysteine. Asp603 lines the L-methionine pocket. Glu609 contacts 5-methyltetrahydropteroyltri-L-glutamate. Zn(2+) is bound by residues His645, Cys647, and Glu669. The Proton donor role is filled by His698. Zn(2+) is bound at residue Cys730.

The protein belongs to the vitamin-B12 independent methionine synthase family. Zn(2+) is required as a cofactor.

The catalysed reaction is 5-methyltetrahydropteroyltri-L-glutamate + L-homocysteine = tetrahydropteroyltri-L-glutamate + L-methionine. Its pathway is amino-acid biosynthesis; L-methionine biosynthesis via de novo pathway; L-methionine from L-homocysteine (MetE route): step 1/1. Catalyzes the transfer of a methyl group from 5-methyltetrahydrofolate to homocysteine resulting in methionine formation. In Bacillus thuringiensis subsp. konkukian (strain 97-27), this protein is 5-methyltetrahydropteroyltriglutamate--homocysteine methyltransferase.